We begin with the raw amino-acid sequence, 366 residues long: Outer membrane porin C 2 (366 aa).

Positions 1–21 (MKLKIVAVVVTGLLAANVAHA) are cleaved as a signal peptide.

It belongs to the Gram-negative porin family. Homotrimer. Forms mixed heterotrimers with OmpF and with PhoE; other mixed heterotrimers are also probable.

It localises to the cell outer membrane. Its function is as follows. Forms pores that allow passive diffusion of small molecules across the outer membrane. Plays a role in virulence. The sequence is that of Outer membrane porin C 2 from Shigella flexneri serotype 5a (strain M90T).